The chain runs to 263 residues: N-glycosylase/DNA lyase (263 aa).

8-oxoguanine is bound by residues Gln-43, Ser-71, and Trp-82. Residues 139–204 (RRYYFENMMG…EDVRIKAYTE (66 aa)) are helix-hairpin-helix. Lys-164 acts as the Schiff-base intermediate with DNA in catalysis. 8-oxoguanine is bound by residues Phe-168 and Pro-194. Asp-196 is an active-site residue. 8-oxoguanine-binding residues include Asp-230 and Trp-234.

It belongs to the archaeal N-glycosylase/DNA lyase (AGOG) family.

The catalysed reaction is 2'-deoxyribonucleotide-(2'-deoxyribose 5'-phosphate)-2'-deoxyribonucleotide-DNA = a 3'-end 2'-deoxyribonucleotide-(2,3-dehydro-2,3-deoxyribose 5'-phosphate)-DNA + a 5'-end 5'-phospho-2'-deoxyribonucleoside-DNA + H(+). Its function is as follows. DNA repair enzyme that is part of the base excision repair (BER) pathway; protects from oxidative damage by removing the major product of DNA oxidation, 8-oxoguanine (GO), from single- and double-stranded DNA substrates. The polypeptide is N-glycosylase/DNA lyase (Thermococcus kodakarensis (strain ATCC BAA-918 / JCM 12380 / KOD1) (Pyrococcus kodakaraensis (strain KOD1))).